The following is a 228-amino-acid chain: Ribulose-phosphate 3-epimerase (228 aa).

Ser9 provides a ligand contact to substrate. Residues His34, Asp36, and His70 each coordinate a divalent metal cation. Asp36 acts as the Proton acceptor in catalysis. Substrate is bound by residues His70, 146-149 (GKGG), 175-177 (DGG), and 197-198 (GT). Asp175 lines the a divalent metal cation pocket. Asp175 acts as the Proton donor in catalysis.

The protein belongs to the ribulose-phosphate 3-epimerase family. Co(2+) serves as cofactor. Fe(2+) is required as a cofactor. It depends on Mn(2+) as a cofactor. The cofactor is Zn(2+).

The catalysed reaction is D-ribulose 5-phosphate = D-xylulose 5-phosphate. It functions in the pathway carbohydrate degradation; pentose phosphate pathway; D-xylulose 5-phosphate from D-ribulose 5-phosphate (non-oxidative stage): step 1/1. Catalyzes the reversible epimerization of D-ribulose 5-phosphate to D-xylulose 5-phosphate. This chain is Ribulose-phosphate 3-epimerase, found in Schizosaccharomyces pombe (strain 972 / ATCC 24843) (Fission yeast).